Consider the following 79-residue polypeptide: uncharacterized protein (79 aa).

The signal sequence occupies residues 1–20; that stretch reads MSQLMGIITRLQSLQETAEA.

This is an uncharacterized protein from Bacillus subtilis (strain 168).